Consider the following 315-residue polypeptide: Methionyl-tRNA formyltransferase (315 aa).

111–114 (SLLP) serves as a coordination point for (6S)-5,6,7,8-tetrahydrofolate.

Belongs to the Fmt family.

The catalysed reaction is L-methionyl-tRNA(fMet) + (6R)-10-formyltetrahydrofolate = N-formyl-L-methionyl-tRNA(fMet) + (6S)-5,6,7,8-tetrahydrofolate + H(+). In terms of biological role, attaches a formyl group to the free amino group of methionyl-tRNA(fMet). The formyl group appears to play a dual role in the initiator identity of N-formylmethionyl-tRNA by promoting its recognition by IF2 and preventing the misappropriation of this tRNA by the elongation apparatus. In Chlorobium phaeobacteroides (strain DSM 266 / SMG 266 / 2430), this protein is Methionyl-tRNA formyltransferase.